Consider the following 105-residue polypeptide: Thioredoxin (105 aa).

In terms of domain architecture, Thioredoxin spans 2–105; sequence VKIVGDLTEF…KLEEAIKKYM (104 aa). Residues cysteine 32 and cysteine 35 each act as nucleophile in the active site. Cysteines 32 and 35 form a disulfide. S-nitrosocysteine is present on residues cysteine 69 and cysteine 73.

This sequence belongs to the thioredoxin family. Post-translationally, may be nitrosylated on several cysteine residues, depending on the oxidation state. Nitrosylated Cys-73 may serve as donor for nitrosylation of target proteins.

It localises to the nucleus. The protein localises to the cytoplasm. The protein resides in the secreted. Participates in various redox reactions through the reversible oxidation of its active center dithiol to a disulfide and catalyzes dithiol-disulfide exchange reactions. Plays a role in the reversible S-nitrosylation of cysteine residues in target proteins, and thereby contributes to the response to intracellular nitric oxide. Nitrosylates the active site Cys of CASP3 in response to nitric oxide (NO), and thereby inhibits caspase-3 activity. Induces the FOS/JUN AP-1 DNA binding activity in ionizing radiation (IR) cells through its oxidation/reduction status and stimulates AP-1 transcriptional activity. This chain is Thioredoxin (TXN), found in Ophiophagus hannah (King cobra).